A 152-amino-acid polypeptide reads, in one-letter code: Lipoprotein signal peptidase (152 aa).

Transmembrane regions (helical) follow at residues 55-75 and 85-105; these read NKMW…VFYM and LGIS…DRVF. Active-site residues include aspartate 111 and aspartate 129. A helical membrane pass occupies residues 124 to 144; it reads VFNIADSALCIGVVLIIIQTL.

Belongs to the peptidase A8 family.

Its subcellular location is the cell membrane. The enzyme catalyses Release of signal peptides from bacterial membrane prolipoproteins. Hydrolyzes -Xaa-Yaa-Zaa-|-(S,diacylglyceryl)Cys-, in which Xaa is hydrophobic (preferably Leu), and Yaa (Ala or Ser) and Zaa (Gly or Ala) have small, neutral side chains.. The protein operates within protein modification; lipoprotein biosynthesis (signal peptide cleavage). Its function is as follows. This protein specifically catalyzes the removal of signal peptides from prolipoproteins. In Bacillus cytotoxicus (strain DSM 22905 / CIP 110041 / 391-98 / NVH 391-98), this protein is Lipoprotein signal peptidase.